The following is a 451-amino-acid chain: Phosphoglucosamine mutase (451 aa).

Residue serine 101 is the Phosphoserine intermediate of the active site. Residues serine 101, aspartate 243, aspartate 245, and aspartate 247 each coordinate Mg(2+). Phosphoserine is present on serine 101.

The protein belongs to the phosphohexose mutase family. It depends on Mg(2+) as a cofactor. Post-translationally, activated by phosphorylation.

The catalysed reaction is alpha-D-glucosamine 1-phosphate = D-glucosamine 6-phosphate. In terms of biological role, catalyzes the conversion of glucosamine-6-phosphate to glucosamine-1-phosphate. The sequence is that of Phosphoglucosamine mutase from Thermodesulfovibrio yellowstonii (strain ATCC 51303 / DSM 11347 / YP87).